Consider the following 208-residue polypeptide: Putative 3-methyladenine DNA glycosylase (208 aa).

This sequence belongs to the DNA glycosylase MPG family.

The polypeptide is Putative 3-methyladenine DNA glycosylase (Lactobacillus delbrueckii subsp. bulgaricus (strain ATCC 11842 / DSM 20081 / BCRC 10696 / JCM 1002 / NBRC 13953 / NCIMB 11778 / NCTC 12712 / WDCM 00102 / Lb 14)).